The chain runs to 96 residues: Redox-responsive transcriptional regulator WhiB3 (96 aa).

The 65-residue stretch at 22–86 folds into the 4Fe-4S Wbl-type domain; sequence LCRGVDSSMF…GGLSESEREL (65 aa). Residues cysteine 23, cysteine 53, cysteine 56, and cysteine 62 each coordinate [4Fe-4S] cluster.

Belongs to the WhiB family. It depends on [4Fe-4S] cluster as a cofactor. In terms of processing, the Fe-S cluster can be nitrosylated by nitric oxide (NO). Post-translationally, upon Fe-S cluster removal intramolecular disulfide bonds are formed.

The protein resides in the cytoplasm. In terms of biological role, a redox-sensitive transcriptional regulator. Maintains intracellular redox homeostasis by regulating catabolic metabolism and polyketide biosynthesis. Regulates expression of the redox buffer ergothioneine (ERG). In concert with myothiol (MSH), another redox buffer, responds to low pH leading to acid resistance. The apo- but not holo-form probably binds DNA. This is Redox-responsive transcriptional regulator WhiB3 (whiB3) from Mycolicibacterium smegmatis (strain ATCC 700084 / mc(2)155) (Mycobacterium smegmatis).